Consider the following 300-residue polypeptide: Protein CANDIDATE G-PROTEIN COUPLED RECEPTOR 2 (300 aa).

7 helical membrane passes run 37-57 (GFLHNTVLVLASILFVAYLAY), 73-93 (IMIAYYGFLWLVSLLNLAWCC), 110-130 (LTLFTTSGMLFLEVSLVAFLF), 152-172 (IGLDLLLKAIYLFGFGVPLFI), 183-203 (WGLWVIHKLLLAGIYGMIFFM), 222-242 (ITVMLALNGLSLFACALTANG), and 245-265 (FGLWLYGITSVCYHAFYLPLL).

Belongs to the UPF0359 family. In terms of assembly, interacts with GPA1. In terms of tissue distribution, expressed at low levels in seedlings.

It is found in the cell membrane. Its function is as follows. Plays a role in plants and microbes interactions. G-protein coupled melatonin receptor involved in root growth mediated by the bacterial quorum-sensing signals N-acyl-homoserine lactones (AHLs). Binds to melatonin. Phytomelatonin receptor required, in collaboration with GPA1, for melatonin-mediated stomatal closure involving H(2)O(2) and Ca(2+) signals. Essential for melatonin-mediated plant response to osmotic stress probably by activating reactive oxygen species (ROS) scavenging ability. The chain is Protein CANDIDATE G-PROTEIN COUPLED RECEPTOR 2 from Arabidopsis thaliana (Mouse-ear cress).